Reading from the N-terminus, the 615-residue chain is Proteasome-associated ATPase (615 aa).

The segment at 1–27 is disordered; that stretch reads MSESERSEASEVFGTSPDSRLSSEDAA. A coiled-coil region spans residues 22-99; it reads SSEDAAELEQ…LREEVDRLGQ (78 aa). Residue 302–307 participates in ATP binding; that stretch reads GCGKTL. A docks into pockets in the proteasome alpha-ring region spans residues 614–615; sequence YL.

It belongs to the AAA ATPase family. As to quaternary structure, homohexamer. Assembles into a hexameric ring structure that caps the 20S proteasome core. Strongly interacts with the prokaryotic ubiquitin-like protein Pup through a hydrophobic interface; the interacting region of ARC lies in its N-terminal coiled-coil domain. There is one Pup binding site per ARC hexamer ring. Upon ATP-binding, the C-terminus of ARC interacts with the alpha-rings of the proteasome core, possibly by binding to the intersubunit pockets.

The protein operates within protein degradation; proteasomal Pup-dependent pathway. In terms of biological role, ATPase which is responsible for recognizing, binding, unfolding and translocation of pupylated proteins into the bacterial 20S proteasome core particle. May be essential for opening the gate of the 20S proteasome via an interaction with its C-terminus, thereby allowing substrate entry and access to the site of proteolysis. Thus, the C-termini of the proteasomal ATPase may function like a 'key in a lock' to induce gate opening and therefore regulate proteolysis. In Mycolicibacterium vanbaalenii (strain DSM 7251 / JCM 13017 / BCRC 16820 / KCTC 9966 / NRRL B-24157 / PYR-1) (Mycobacterium vanbaalenii), this protein is Proteasome-associated ATPase.